The chain runs to 1064 residues: Bifunctional cytochrome P450/NADPH--P450 reductase ascE (1064 aa).

Residues 1-484 (MTELIPGPKG…LHGGAKKGSK (484 aa)) are cytochrome P450. Position 411 (Cys-411) interacts with heme. The NADPH-P-450 reductase stretch occupies residues 485 to 1064 (IDGPSSGASL…ANRYVTEIFA (580 aa)). In terms of domain architecture, Flavodoxin-like spans 504–644 (MTILYGSDSG…DFERWQDDQL (141 aa)). Residues 510-514 (SDSGT) and 588-620 (VYGCGNKDYTSTFHRIPKLLDAEFERCGAKRIA) each bind FMN. In terms of domain architecture, FAD-binding FR-type spans 676 to 905 (VDADEATVQS…KPALRLFHPP (230 aa)).

This sequence in the N-terminal section; belongs to the cytochrome P450 family. Requires FAD as cofactor. The cofactor is FMN. Heme serves as cofactor.

The catalysed reaction is ilicicolin A + NADPH + O2 + H(+) = ilicicolin A epoxide + NADP(+) + H2O. The protein operates within secondary metabolite biosynthesis; terpenoid biosynthesis. In terms of biological role, bifunctional cytochrome P450/NADPH--P450 reductase; part of the asc-1 gene cluster that mediates the biosynthesis both ascochlorin and ascofuranone, a strong inhibitor of cyanide-insensitive alternative oxidases and a promising drug candidate against African trypanosomiasis. The first step in the pathway is performed by the non-reducing polyketide synthase ascC that produces orsellinic acid by condensing acetyl-CoA with 3 malonyl-CoA units. Orsellinic acid is then prenylated by the prenyltransferase ascA to yield ilicicolinic acid B. Ilicicolinic acid B is further reduced to ilicicolin B by the reductase ascB. The halogenase ascD then chlorinates ilicicolin B to produce ilicicolin A which is converted to ilicicolin A epoxide by the cytochrome P450 monooxygenase ascE that catalyzes stereoselective epoxidation of the terminal double bond of the prenyl group. Ilicicolin A epoxide is the last common precursor for the biosynthesis of ascofuranone and ascochlorin. The terpene cyclase ascF produces a monocyclic terpene, and the cyclization reaction is proposed to be initiated by protonation of the terminal epoxide of ilicicolin A epoxide to generate a monocyclic tertiarycation, which is followed by a series of hydride and methyl shifts with abstraction of proton, leading to the formation of the (14S,15R,19R)-trimethylcyclohexanone ring structure of ilicicolin C, which is finally reduced to ascochlorin by the dehydrogenase ascG. On the other hand, ilicicolin A epoxide is hydroxylated by the cytochrome P450 monooxygenase ascH, and the resultant product is cyclized by the terpene cyclase ascI to ascofuranol via protonation-initiated epoxide ring opening, which facilitates the 6-endo-tet cyclization to form the tetrahy-drofuran ring. Finally, ascofuranol is oxidized into ascofuranone by ascJ. The sequence is that of Bifunctional cytochrome P450/NADPH--P450 reductase ascE from Acremonium egyptiacum (Oospora egyptiaca).